Reading from the N-terminus, the 702-residue chain is Elongation factor G (702 aa).

The tr-type G domain occupies Asp8 to Leu286. GTP is bound by residues Ala17–Thr24, Asp85–His89, and Asn139–Asp142.

It belongs to the TRAFAC class translation factor GTPase superfamily. Classic translation factor GTPase family. EF-G/EF-2 subfamily.

Its subcellular location is the cytoplasm. Functionally, catalyzes the GTP-dependent ribosomal translocation step during translation elongation. During this step, the ribosome changes from the pre-translocational (PRE) to the post-translocational (POST) state as the newly formed A-site-bound peptidyl-tRNA and P-site-bound deacylated tRNA move to the P and E sites, respectively. Catalyzes the coordinated movement of the two tRNA molecules, the mRNA and conformational changes in the ribosome. This Chloroflexus aggregans (strain MD-66 / DSM 9485) protein is Elongation factor G.